The chain runs to 109 residues: Nucleoid-associated protein swp_1717 (109 aa).

The disordered stretch occupies residues 88–109; it reads QKDKMAEVTGGMQLPPGMKMPF.

It belongs to the YbaB/EbfC family. In terms of assembly, homodimer.

It localises to the cytoplasm. Its subcellular location is the nucleoid. Binds to DNA and alters its conformation. May be involved in regulation of gene expression, nucleoid organization and DNA protection. The protein is Nucleoid-associated protein swp_1717 of Shewanella piezotolerans (strain WP3 / JCM 13877).